The sequence spans 140 residues: Nucleoside diphosphate kinase (140 aa).

Residues Lys-11, Phe-59, Arg-87, Thr-93, Arg-104, and Asn-114 each coordinate ATP. The Pros-phosphohistidine intermediate role is filled by His-117.

The protein belongs to the NDK family. Homotetramer. Mg(2+) serves as cofactor.

The protein localises to the cytoplasm. It carries out the reaction a 2'-deoxyribonucleoside 5'-diphosphate + ATP = a 2'-deoxyribonucleoside 5'-triphosphate + ADP. The enzyme catalyses a ribonucleoside 5'-diphosphate + ATP = a ribonucleoside 5'-triphosphate + ADP. Its function is as follows. Major role in the synthesis of nucleoside triphosphates other than ATP. The ATP gamma phosphate is transferred to the NDP beta phosphate via a ping-pong mechanism, using a phosphorylated active-site intermediate. The sequence is that of Nucleoside diphosphate kinase from Roseobacter denitrificans (strain ATCC 33942 / OCh 114) (Erythrobacter sp. (strain OCh 114)).